Here is a 486-residue protein sequence, read N- to C-terminus: Probable FAD-binding monooxygenase ltbD (486 aa).

Residues 186 to 243 (PAGDGGTNDQGPSRAQSTASSGGSGRPRSTESPQSGAQASTTPTSPPTTQSTGDDPAA) are disordered. Residues 194 to 206 (DQGPSRAQSTASS) show a composition bias toward polar residues. A compositionally biased stretch (low complexity) spans 220–241 (SGAQASTTPTSPPTTQSTGDDP).

This sequence belongs to the FAD-binding monooxygenase family. In terms of assembly, homodimer. FAD is required as a cofactor.

Functionally, probable FAD-binding monooxygenase; part of the gene cluster that mediates the biosynthesis of luteodienoside A, a glycosylated polyketide consisting of an unusual 1-O-beta-D-glucopyranosyl-myo-inositol (glucinol) ester of 3-hydroxy-2,2,4-trimethylocta-4,6-dienoic acid. The HR-PKS ltbA produces the trimethylated polyketide chain from acetyl-CoA, malonyl-CoA and S-adenosylmethionine (SAM), and the ltbA cAT domain then uses glucinol produced by the glycosyltransferase ltbB as an offloading substrate to release luteodienoside A. Since ltbA and ltbB are sufficient for the biosynthesis of luteodienoside A, the functions of the methyltransferase ltbC and the FAD-binding monooxygenase ltbD within the pathway remain obscur. This chain is Probable FAD-binding monooxygenase ltbD, found in Aspergillus luteorubrus.